A 442-amino-acid chain; its full sequence is Trigger factor (442 aa).

The 86-residue stretch at 162-247 (GDTVTIDYKG…IHEVKSKQLP (86 aa)) folds into the PPIase FKBP-type domain.

It belongs to the FKBP-type PPIase family. Tig subfamily.

The protein localises to the cytoplasm. It carries out the reaction [protein]-peptidylproline (omega=180) = [protein]-peptidylproline (omega=0). Functionally, involved in protein export. Acts as a chaperone by maintaining the newly synthesized protein in an open conformation. Functions as a peptidyl-prolyl cis-trans isomerase. The protein is Trigger factor of Lactobacillus acidophilus (strain ATCC 700396 / NCK56 / N2 / NCFM).